The sequence spans 410 residues: Dipeptidase 1 (410 aa).

A signal peptide spans 1–16 (MWTSWWLWPLVAVCTA). Positions 36 and 38 each coordinate Zn(2+). N57 carries an N-linked (GlcNAc...) asparagine glycan. C87 and C170 are disulfide-bonded. E141 contacts Zn(2+). H168 is a substrate binding site. 2 residues coordinate Zn(2+): H214 and H235. Cysteines 242 and 274 form a disulfide. Residues R246 and D304 each contribute to the substrate site. Residue S384 is the site of GPI-anchor amidated serine attachment. Residues 385–410 (EAPSLHRRPGALLASLSLLLLSLGLL) constitute a propeptide, removed in mature form.

This sequence belongs to the metallo-dependent hydrolases superfamily. Peptidase M19 family. Homodimer; disulfide-linked. The cofactor is Zn(2+).

It is found in the apical cell membrane. The protein localises to the cell projection. It localises to the microvillus membrane. It catalyses the reaction an L-aminoacyl-L-amino acid + H2O = 2 an L-alpha-amino acid. It carries out the reaction leukotriene D4 + H2O = leukotriene E4 + glycine. The enzyme catalyses L-cystine-bis-glycine + 2 H2O = L-cystine + 2 glycine. The catalysed reaction is a beta-lactam + H2O = a substituted beta-amino acid. It catalyses the reaction glycyldehydrophenylalanine + H2O = 2,3-didehydrophenylalanine + glycine. With respect to regulation, inhibited by L-penicillamine. Beta-lactamase activity is inhibited by cilastatin. Its function is as follows. Hydrolyzes a wide range of dipeptides including the conversion of leukotriene D4 to leukotriene E4. Hydrolyzes cystinyl-bis-glycine (cys-bis-gly) formed during glutathione degradation. Also possesses beta lactamase activity and hydrolytically inactivates beta-lactam antibiotics. In terms of biological role, independently of its dipeptidase activity, acts as an adhesion receptor for neutrophil recruitment from bloodstream into inflamed lungs and liver. The protein is Dipeptidase 1 (DPEP1) of Oryctolagus cuniculus (Rabbit).